A 224-amino-acid chain; its full sequence is MPTPEKRLRLMQLASNSLPVGGYSWSQGLEWAVEAGWVEDSAAFEHWQQLQMEQSFFAVDLPLLARLYRACEAGDPDSAGRWTAYLLACRETRELRDEERNRGAAFTRLLVDWQPDCPAEWRKLCQQSQLTGMAWLGVRWQISVSDLALSLGYSWIESAVMAGVRLVPYGQLAAQQLIMRLCARYAANMDSALATPDHAIGSATPLASIASARHETQYSRLFRS.

The protein belongs to the UreF family. As to quaternary structure, ureD, UreF and UreG form a complex that acts as a GTP-hydrolysis-dependent molecular chaperone, activating the urease apoprotein by helping to assemble the nickel containing metallocenter of UreC. The UreE protein probably delivers the nickel.

Its subcellular location is the cytoplasm. Its function is as follows. Required for maturation of urease via the functional incorporation of the urease nickel metallocenter. This is Urease accessory protein UreF from Escherichia coli O157:H7.